Reading from the N-terminus, the 230-residue chain is Orotidine 5'-phosphate decarboxylase (230 aa).

Substrate-binding positions include Asp-10, Lys-32, 59 to 68, Thr-118, Arg-179, Gln-188, Gly-208, and Arg-209; that span reads DLKLHDIPNT. Lys-61 serves as the catalytic Proton donor.

This sequence belongs to the OMP decarboxylase family. Type 1 subfamily. Homodimer.

The enzyme catalyses orotidine 5'-phosphate + H(+) = UMP + CO2. Its pathway is pyrimidine metabolism; UMP biosynthesis via de novo pathway; UMP from orotate: step 2/2. Catalyzes the decarboxylation of orotidine 5'-monophosphate (OMP) to uridine 5'-monophosphate (UMP). In Opitutus terrae (strain DSM 11246 / JCM 15787 / PB90-1), this protein is Orotidine 5'-phosphate decarboxylase.